Consider the following 344-residue polypeptide: Envelope glycoprotein M (344 aa).

The Intravirion segment spans residues 1 to 12 (MASSRVDTINLR). A helical transmembrane segment spans residues 13 to 33 (IWLVSIICAALSFINVTVHLI). At 34 to 76 (AINFPNLGFPCAYFEINDLKAVNLSANNEIYQMTHQLYINPVQ) the chain is on the virion surface side. A helical transmembrane segment spans residues 77–97 (IICYVLIMAILFLLIIIYYIV). Residues 98–125 (CCAKVFSSNKTSNVNQTTRDITWMGDTS) lie on the Intravirion side of the membrane. Residues 126–146 (SCFQFILIMDTFQLFVTALSF) form a helical membrane-spanning segment. Position 147 (Arg-147) is a topological domain, virion surface. Residues 148–168 (LVALGAFAYSIFFVCFTTFNV) traverse the membrane as a helical segment. Topologically, residues 169–203 (TLITQFQSADKSFFAFQKIHPNLKGTVQFKTVVIN) are intravirion. The chain crosses the membrane as a helical span at residues 204-224 (LSELMLGYSTMFLGITTCLGV). The Virion surface segment spans residues 225–238 (GNSIYIRSITVAFS). Residues 239–259 (SINTFLVMACIYSIVIEAVLV) form a helical membrane-spanning segment. Over 260 to 263 (RYVK) the chain is Intravirion. A helical membrane pass occupies residues 264-284 (PLFGYYVGMFCGAVGLSFPIL). Topologically, residues 285–293 (QYETFFESE) are virion surface. A helical transmembrane segment spans residues 294-314 (WSTGLIINLSVVAIISIGFII). At 315-344 (CRLVRYLVKKKRRYKQLLNAESSSLMDENE) the chain is on the intravirion side.

The protein belongs to the herpesviridae glycoprotein M family. In terms of assembly, interacts (via N-terminus) with gN (via N-terminus). The gM-gN heterodimer forms the gCII complex.

It is found in the virion membrane. Its subcellular location is the host Golgi apparatus. The protein resides in the host trans-Golgi network. It localises to the host endosome membrane. The protein localises to the host nucleus inner membrane. Envelope glycoprotein important for virion assembly and egress. Plays a role in the correct incorporation of gH-gL into virion membrane. Directs the glycoprotein N (gN) to the host trans-Golgi network. In Homo sapiens (Human), this protein is Envelope glycoprotein M.